We begin with the raw amino-acid sequence, 179 residues long: Large ribosomal subunit protein uL5 (179 aa).

This sequence belongs to the universal ribosomal protein uL5 family. In terms of assembly, part of the 50S ribosomal subunit; part of the 5S rRNA/L5/L18/L25 subcomplex. Contacts the 5S rRNA and the P site tRNA. Forms a bridge to the 30S subunit in the 70S ribosome.

Its function is as follows. This is one of the proteins that bind and probably mediate the attachment of the 5S RNA into the large ribosomal subunit, where it forms part of the central protuberance. In the 70S ribosome it contacts protein S13 of the 30S subunit (bridge B1b), connecting the 2 subunits; this bridge is implicated in subunit movement. Contacts the P site tRNA; the 5S rRNA and some of its associated proteins might help stabilize positioning of ribosome-bound tRNAs. This Cronobacter sakazakii (strain ATCC BAA-894) (Enterobacter sakazakii) protein is Large ribosomal subunit protein uL5.